A 324-amino-acid polypeptide reads, in one-letter code: tRNA (cytidine(32)/guanosine(34)-2'-O)-methyltransferase (324 aa).

Residues glycine 53, tryptophan 55, aspartate 75, aspartate 91, and aspartate 116 each contribute to the S-adenosyl-L-methionine site. Lysine 156 serves as the catalytic Proton acceptor. The segment at 221–240 (DFNQLDGPTRVIVPFVACGD) is required for binding to WDR6.

This sequence belongs to the class I-like SAM-binding methyltransferase superfamily. RNA methyltransferase RlmE family. TRM7 subfamily. Interacts with WDR6; the interaction is direct, and required for 2'-O-methylation of position 34 in substrate tRNAs.

The protein resides in the cytoplasm. It localises to the nucleus. The catalysed reaction is cytidine(32)/guanosine(34) in tRNA + 2 S-adenosyl-L-methionine = 2'-O-methylcytidine(32)/2'-O-methylguanosine(34) in tRNA + 2 S-adenosyl-L-homocysteine + 2 H(+). Functionally, methylates the 2'-O-ribose of nucleotides at positions 32 and 34 of the tRNA anticodon loop of substrate tRNAs. Requisite for faithful cytoplasmic translation. Requires THADA for methylation of the cytidine at position 32 of the anticodon loop of substrate tRNAs. Requires WDR6 for methylation of the nucleotide at position 34 of the anticodon loop of substrate tRNAs. Promotes translation efficiency of the UUU codon. Plays a role in neurogenesis. Required for expression of genes involved in neurogenesis and mitochondrial translation and energy generation. Requisite for RNA-mediated gene silencing. May modify position 32 in tRNA(Arg(ACG)), tRNA(Gln(CUG)), tRNA(Leu(UAA)), tRNA(Leu(UAG)), tRNA(Leu(AAG)), tRNA(Leu(CAG)), tRNA(Phe(GAA)), tRNA(Trp(CCA)) and tRNA(Val(AAC)), and position 34 in tRNA(Phe(GAA)), tRNA(Leu(CAA)), tRNA(Leu(UAA)), tRNA(Sec(UCA)), and tRNA(Trp(CCA)). The protein is tRNA (cytidine(32)/guanosine(34)-2'-O)-methyltransferase of Mus musculus (Mouse).